The primary structure comprises 432 residues: UDP-N-acetylmuramate--L-alanine ligase (432 aa).

108–114 (GAHGKTS) is an ATP binding site.

Belongs to the MurCDEF family.

It localises to the cytoplasm. It catalyses the reaction UDP-N-acetyl-alpha-D-muramate + L-alanine + ATP = UDP-N-acetyl-alpha-D-muramoyl-L-alanine + ADP + phosphate + H(+). It functions in the pathway cell wall biogenesis; peptidoglycan biosynthesis. Functionally, cell wall formation. The chain is UDP-N-acetylmuramate--L-alanine ligase from Bacillus licheniformis (strain ATCC 14580 / DSM 13 / JCM 2505 / CCUG 7422 / NBRC 12200 / NCIMB 9375 / NCTC 10341 / NRRL NRS-1264 / Gibson 46).